Here is a 353-residue protein sequence, read N- to C-terminus: 2-oxoglutarate-dependent dioxygenase phqC (353 aa).

Residues 199–315 form the Fe2OG dioxygenase domain; sequence CASELRLNNY…RRSCAFFLKA (117 aa). Residues H227, D229, and H287 each coordinate Fe cation. R302 serves as a coordination point for 2-oxoglutarate.

Belongs to the iron/ascorbate-dependent oxidoreductase family. Fe(2+) serves as cofactor.

It participates in alkaloid biosynthesis. In terms of biological role, 2-oxoglutarate-dependent dioxygenase; part of the gene cluster that mediates the biosynthesis of paraherquamide, a fungal indole alkaloid that belongs to a family of natural products containing a characteristic bicyclo[2.2.2]diazaoctane core. The first steps in the biosynthesis of paraherquamide is the production of the beta-methyl-proline precursor from L-isoleucine. They require oxidation of a terminally hydroxylated L-isoleucine to the corresponding aldehyde by enzymes which have still to be identified. Spontaneous cyclization and dehydration would yield the 4-methyl pyrolline-5-carboxylic acid, which is then reduced by the pyrroline-5-carboxylate reductase phqD leading to the beta-methyl-proline precursor. The next step of paraherquamide biosynthesis involves coupling of beta-methyl-proline and L-tryptophan by the bimodular NRPS phqB, to produce a monooxopiperazine intermediate. The reductase (R) domain of phqB utilizes NADPH for hydride transfer to reduce the thioester bond of the T domain-tethered linear dipeptide to a hemithioaminal intermediate, which spontaneously cleaves the C-S bond to release the aldehyde product. This compound undergoes spontaneous cyclization and dehydration to give a dienamine which is reverse prenylated at C-2 by the reverse prenyltransferase phqJ. The other prenyltransferase present in the cluster, phqI may be a redundant gene in the pathway. During biosynthetic assembly, the key step to produce the polycyclic core is catalyzed by the bifunctional reductase and intramolecular [4+2] Diels-Alderase, phqE, resulting in formation of the [2.2.2] diazaoctane intermediate preparaherquamide. Following formation of preparaherquamide, an indole 2,3-epoxidation-initiated pinacol-like rearrangement is catalyzed by the phqK FAD-dependent monooxygenase. The prenyltransferase phqA, the cytochrome P450 monooxygenase phqL, and the FAD-linked oxidoreductase phqH (or the cytochrome P450 monooxygenase phqM), are proposed to be involved in the formation of the pyran ring. The FAD-dependent monooxygenase phqK is likely responsible for generation of the spiro-oxindole, and the N-methylation is likely mediated by the phqN methyltransferase leading to the isolable natural product paraherquamide F. However, the order of these biosynthetic steps has still to be determined. In late-stage paraherquamide biosynthesis, the third P450 monooxygenase, phqO, is probably responsible for the C-14 hydroxylation, transforming paraherquamide F to paraherquamide G, and paraherquamide E to the final product paraherquamide A. The expansion from the 6-membered ring pyran (in paraherquamides F and G) to the 7-membered dioxepin ring (in paraherquamides A and E) represents a poorly understood but intriguing process that probably involves the 2-oxoglutarate-dependent dioxygenase phqC. Finally, the remaining members of the paraherquamide cluster, including phqI as well as phqM (or phqH), do not have a clearly prescribed role and appear to be redundant. This is 2-oxoglutarate-dependent dioxygenase phqC from Penicillium fellutanum.